We begin with the raw amino-acid sequence, 148 residues long: Snaclec 27 (148 aa).

An N-terminal signal peptide occupies residues 1–23; the sequence is WGDSSSSASACWSCFSLVSGIGA. 3 cysteine pairs are disulfide-bonded: C27–C38, C55–C144, and C121–C136. The 112-residue stretch at 34–145 folds into the C-type lectin domain; the sequence is HEGHCYKVFS…CSSTQQFVCK (112 aa).

Belongs to the snaclec family. In terms of assembly, heterodimer; disulfide-linked. As to expression, expressed by the venom gland.

It localises to the secreted. In terms of biological role, interferes with one step of hemostasis (modulation of platelet aggregation, or coagulation cascade, for example). The chain is Snaclec 27 from Echis ocellatus (Ocellated saw-scaled viper).